A 262-amino-acid polypeptide reads, in one-letter code: Hydroxyethylthiazole kinase (262 aa).

Met50 contacts substrate. Positions 125 and 171 each coordinate ATP. Gly198 provides a ligand contact to substrate.

This sequence belongs to the Thz kinase family. It depends on Mg(2+) as a cofactor.

The catalysed reaction is 5-(2-hydroxyethyl)-4-methylthiazole + ATP = 4-methyl-5-(2-phosphooxyethyl)-thiazole + ADP + H(+). Its pathway is cofactor biosynthesis; thiamine diphosphate biosynthesis; 4-methyl-5-(2-phosphoethyl)-thiazole from 5-(2-hydroxyethyl)-4-methylthiazole: step 1/1. Its function is as follows. Catalyzes the phosphorylation of the hydroxyl group of 4-methyl-5-beta-hydroxyethylthiazole (THZ). This is Hydroxyethylthiazole kinase from Escherichia coli O6:K15:H31 (strain 536 / UPEC).